The following is a 379-amino-acid chain: MYVLGMMSGTSADGVDTVLAEFTGNPDQPQWRIINSTSHEYPNNLKQAIIDFGQGCSFSSQQFIELSEAITEFYAMAAKSCDPKGIALIAGCHGQTVFHRPPSGAKRGSSLQILQAPLLAILIDKTVIYDFRSKDLALGGQGAPLVPLLDAALIGACTGWRAVLNLGGIANISLIPPRSGPDKTSPVLGWDCGPANTLIDLAVQQRTNHELYFDHDGLIALNGSPDFDAIEQWLNEPFFKKPPPKSTGREQFGLKDLERRMTQINRSSTKDLVSTLTIFSACVIAQDLHNLYKSKMIKPIELFIAGGGSENPVLFREIQLRCRGMRVRSIGEIGIPVKSREPLTFALLAWWHLLNKPGSSTAITGVSKGAVLGVQVHPN.

9–16 (GTSADGVD) contributes to the ATP binding site.

The protein belongs to the anhydro-N-acetylmuramic acid kinase family.

The catalysed reaction is 1,6-anhydro-N-acetyl-beta-muramate + ATP + H2O = N-acetyl-D-muramate 6-phosphate + ADP + H(+). It functions in the pathway amino-sugar metabolism; 1,6-anhydro-N-acetylmuramate degradation. It participates in cell wall biogenesis; peptidoglycan recycling. Catalyzes the specific phosphorylation of 1,6-anhydro-N-acetylmuramic acid (anhMurNAc) with the simultaneous cleavage of the 1,6-anhydro ring, generating MurNAc-6-P. Is required for the utilization of anhMurNAc either imported from the medium or derived from its own cell wall murein, and thus plays a role in cell wall recycling. In Prochlorococcus marinus (strain MIT 9211), this protein is Anhydro-N-acetylmuramic acid kinase.